Consider the following 144-residue polypeptide: Sirohydrochlorin cobaltochelatase (144 aa).

His9 acts as the Proton acceptor in catalysis. His9 is a binding site for Co(2+). His9 is a Ni(2+) binding site. Residues Glu45 and 70 to 75 each bind substrate; that span reads LAPGNH. Residue His75 participates in Co(2+) binding. His75 provides a ligand contact to Ni(2+). Positions 89 to 112 are disordered; that stretch reads GDDEGGHHHHHDHEHHHHHHDTTA. Residues 95 to 108 show a composition bias toward basic residues; the sequence is HHHHHDHEHHHHHH.

Belongs to the CbiX family. CbiXS subfamily. Homotetramer; dimer of dimers.

The catalysed reaction is Co-sirohydrochlorin + 2 H(+) = sirohydrochlorin + Co(2+). It carries out the reaction Ni-sirohydrochlorin + 2 H(+) = sirohydrochlorin + Ni(2+). The protein operates within cofactor biosynthesis; adenosylcobalamin biosynthesis; cob(II)yrinate a,c-diamide from sirohydrochlorin (anaerobic route): step 1/10. Functionally, catalyzes the insertion of Co(2+) into sirohydrochlorin as part of the anaerobic pathway to cobalamin biosynthesis. Involved in the biosynthesis of the unique nickel-containing tetrapyrrole coenzyme F430, the prosthetic group of methyl-coenzyme M reductase (MCR), which plays a key role in methanogenesis and anaerobic methane oxidation. Catalyzes the insertion of Ni(2+) into sirohydrochlorin to yield Ni-sirohydrochlorin. The protein is Sirohydrochlorin cobaltochelatase of Methanococcus maripaludis (strain DSM 14266 / JCM 13030 / NBRC 101832 / S2 / LL).